Reading from the N-terminus, the 160-residue chain is Small ribosomal subunit protein uS7 (160 aa).

The protein belongs to the universal ribosomal protein uS7 family. As to quaternary structure, part of the 30S ribosomal subunit. Contacts proteins S9 and S11.

Its function is as follows. One of the primary rRNA binding proteins, it binds directly to 16S rRNA where it nucleates assembly of the head domain of the 30S subunit. Is located at the subunit interface close to the decoding center, probably blocks exit of the E-site tRNA. This Anaplasma marginale (strain Florida) protein is Small ribosomal subunit protein uS7.